Here is a 350-residue protein sequence, read N- to C-terminus: MTQAPDREKALELAMAQIEKSYGKGSVMRLGDEMRQPISVIPTGSIALDVALGIGGLPRGRVVEIYGPESSGKTTVALHAVANAQAAGGVAAFIDAEHALDPEYAKKLGVDTDSLLVSQPDTGEQALEIADMLIRSGALDILVIDSVAALVPRAELEGEMGDSHVGLQARLMSQALRKMTGALNNSGTTAIFINQLREKIGVMFGSPETTTGGKALKFYASVRMDVRRIETLKDGTNAVGNRTRVKIVKNKVSPPFKQAEFDILYGRGISREGSLIDMGVDQGFIRKSGSWFTYEGEQLGQGKENARTFLMENDEVANEIEKKIKEKLGIGAVVTDDLSDDGVLPAPVDF.

ATP is bound at residue 67–74 (GPESSGKT).

The protein belongs to the RecA family.

It is found in the cytoplasm. Can catalyze the hydrolysis of ATP in the presence of single-stranded DNA, the ATP-dependent uptake of single-stranded DNA by duplex DNA, and the ATP-dependent hybridization of homologous single-stranded DNAs. It interacts with LexA causing its activation and leading to its autocatalytic cleavage. The sequence is that of Protein RecA from Mycobacterium avium (strain 104).